Reading from the N-terminus, the 274-residue chain is 3-methyl-2-oxobutanoate hydroxymethyltransferase (274 aa).

Mg(2+) contacts are provided by D44 and D83. 3-methyl-2-oxobutanoate is bound by residues 44–45, D83, and K113; that span reads DS. E115 lines the Mg(2+) pocket. E182 (proton acceptor) is an active-site residue.

The protein belongs to the PanB family. In terms of assembly, homodecamer; pentamer of dimers. Mg(2+) is required as a cofactor.

Its subcellular location is the cytoplasm. It catalyses the reaction 3-methyl-2-oxobutanoate + (6R)-5,10-methylene-5,6,7,8-tetrahydrofolate + H2O = 2-dehydropantoate + (6S)-5,6,7,8-tetrahydrofolate. Its pathway is cofactor biosynthesis; (R)-pantothenate biosynthesis; (R)-pantoate from 3-methyl-2-oxobutanoate: step 1/2. Catalyzes the reversible reaction in which hydroxymethyl group from 5,10-methylenetetrahydrofolate is transferred onto alpha-ketoisovalerate to form ketopantoate. This Campylobacter jejuni subsp. jejuni serotype O:23/36 (strain 81-176) protein is 3-methyl-2-oxobutanoate hydroxymethyltransferase.